A 430-amino-acid chain; its full sequence is Adenylosuccinate synthetase (430 aa).

Residues 12–18 (GDEGKGK) and 40–42 (GHT) each bind GTP. Asp-13 (proton acceptor) is an active-site residue. Mg(2+) is bound by residues Asp-13 and Gly-40. IMP contacts are provided by residues 13-16 (DEGK), 38-41 (NAGH), Thr-130, Arg-144, Gln-224, Thr-239, and Arg-303. Catalysis depends on His-41, which acts as the Proton donor. 299-305 (VVTGRPR) is a substrate binding site. GTP contacts are provided by residues Arg-305, 331 to 333 (KLD), and 413 to 415 (STS).

It belongs to the adenylosuccinate synthetase family. Homodimer. It depends on Mg(2+) as a cofactor.

Its subcellular location is the cytoplasm. The catalysed reaction is IMP + L-aspartate + GTP = N(6)-(1,2-dicarboxyethyl)-AMP + GDP + phosphate + 2 H(+). The protein operates within purine metabolism; AMP biosynthesis via de novo pathway; AMP from IMP: step 1/2. Its function is as follows. Plays an important role in the de novo pathway of purine nucleotide biosynthesis. Catalyzes the first committed step in the biosynthesis of AMP from IMP. The sequence is that of Adenylosuccinate synthetase from Azorhizobium caulinodans (strain ATCC 43989 / DSM 5975 / JCM 20966 / LMG 6465 / NBRC 14845 / NCIMB 13405 / ORS 571).